The following is a 348-amino-acid chain: Mannonate dehydratase (348 aa).

It belongs to the mannonate dehydratase family. The cofactor is Fe(2+). Mn(2+) serves as cofactor.

It carries out the reaction D-mannonate = 2-dehydro-3-deoxy-D-gluconate + H2O. The protein operates within carbohydrate metabolism; pentose and glucuronate interconversion. Catalyzes the dehydration of D-mannonate. The sequence is that of Mannonate dehydratase from Streptococcus agalactiae serotype III (strain NEM316).